The chain runs to 337 residues: MKRIAVLTSGGDAPGMNAAIRAVVRKAISEGMEVYGINRGYAGMVDGDIFPLGSKEVGDKISRGGTFLYSARYPEFAQLEGQLAGIEQLKKHGIEGVVVIGGDGSYHGAMRLTEHGFPAVGIPGTIDNDIAGTDYTIGFDTAVNTAVEAIDKLRDTSSSHGRTFVVEVMGRNAGDIALWAGIASGADQIIVPEEEFDIEKVASTIQYDFEHKGKNHHIIVLAEGVMSGEAFAQKLKEAGDKSDLRVTNLGHILRGGSPTARDRVIASWMGSHAVELLKEGKGGLAVGIHNEELVESPILGTAEEGALFSLTEEGKIIVNNPHKARLDFAALNRSLSQ.

Glycine 11 lines the ATP pocket. 21–25 (RAVVR) lines the ADP pocket. ATP-binding positions include 72-73 (RY) and 102-105 (GDGS). Aspartate 103 contributes to the Mg(2+) binding site. 125–127 (TID) provides a ligand contact to substrate. Aspartate 127 (proton acceptor) is an active-site residue. Residue arginine 154 participates in ADP binding. Substrate-binding positions include arginine 162 and 169–171 (MGR). Residues 185-187 (GAD), lysine 212, and 214-216 (KNH) contribute to the ADP site. Substrate is bound by residues glutamate 223, arginine 245, and 251 to 254 (HILR).

It belongs to the phosphofructokinase type A (PFKA) family. ATP-dependent PFK group I subfamily. Prokaryotic clade 'B1' sub-subfamily. Homotetramer. It depends on Mg(2+) as a cofactor.

The protein resides in the cytoplasm. The catalysed reaction is beta-D-fructose 6-phosphate + ATP = beta-D-fructose 1,6-bisphosphate + ADP + H(+). Its pathway is carbohydrate degradation; glycolysis; D-glyceraldehyde 3-phosphate and glycerone phosphate from D-glucose: step 3/4. With respect to regulation, allosterically activated by ADP and other diphosphonucleosides, and allosterically inhibited by phosphoenolpyruvate. In terms of biological role, catalyzes the phosphorylation of D-fructose 6-phosphate to fructose 1,6-bisphosphate by ATP, the first committing step of glycolysis. In Streptococcus pyogenes serotype M28 (strain MGAS6180), this protein is ATP-dependent 6-phosphofructokinase.